An 889-amino-acid chain; its full sequence is MMPDDNSNSSTQNSSALYKDLRKEYESLFTLKEDSGLEISPIFNVLPPKKDYPDYYAVIKNPVSFNTLKKRIPHYTDAQQFMNDVVQIPWNAKTYNTRDSGIYKYALVLEKYLKDTIYPNLKEKYPQLVYPDLGPLPDEPGYEEFQQKLREKAEEVARANAARAESSSSMNSTEAARRLRKTRTSVKRESEPGTDTNNDEDYEATDMDIDNPKDADFPDLIRKPLININPYTRKPLRDNRSTTPSHSGTPQPLGPRHRQVSRTQVKRGRPPIIDLPYIQRMKNVMKVLKKEVLDSGIGLTDLFERLPDRHRDANYYIMIANPISLQDINKKVKTRRYKTFQEFQNDFNLMLTNFRISHRGDPESIKISNILEKTFTSLARFELSKPDRSFIPEGELRYPLDEVIVNNISYHVGDWALLRNQNDPQKPIVGQIFRLWKTPDGKQWLNACWYYRPEQTVHRVDRLFYKNEVMKTGQYRDHLVSNLVGKCYVIHFTRYQRGNPDMKLEGPLFVCEFRYNESDKIFNKIRTWKACLPEEIRDLDEATIPVNGRKFFKYPSPIRHLLPANATPHDRVPEPTMGSPDAPPLVGAVYMRPKMQRDDLGEYATSDDCPRYIIRPNDSPEEGQVDIETGTITTNTPTANALPKTGYSSSKLSSLRYNRSSMSLENQNAIGQQQIPLSRVGSPGAGGPLTVQGLKQHQLQRLQQQQHQYQQQKRSQASRYNIPTIIDDLTSQASRGNLGNIMIDAASSFVLPISITKNVDVLQRTDLHSQTKRSGREEMFPWKKTKGEILWFRGPSVIVNERIINSGDPHLSLPLNRWFTTNKKRKLEYEEVEETMEDVTGKDKDDDGLEPDVENEKESLPGPFVLGLRPSAKFTAHRLSMLRPPSSSS.

Positions 12–120 constitute a Bromo 1 domain; sequence QNSSALYKDL…KYLKDTIYPN (109 aa). The tract at residues 151 to 268 is disordered; the sequence is EKAEEVARAN…QVSRTQVKRG (118 aa). Low complexity predominate over residues 158-174; it reads RANAARAESSSSMNSTE. Residues 197 to 209 show a composition bias toward acidic residues; that stretch reads NNDEDYEATDMDI. Residues 210–222 show a composition bias toward basic and acidic residues; that stretch reads DNPKDADFPDLIR. Residues 241–250 are compositionally biased toward polar residues; the sequence is STTPSHSGTP. Positions 255–268 are enriched in basic residues; sequence PRHRQVSRTQVKRG. Residues 280 to 382 enclose the Bromo 2 domain; the sequence is RMKNVMKVLK…KTFTSLARFE (103 aa). The 119-residue stretch at 408-526 folds into the BAH domain; that stretch reads ISYHVGDWAL…ESDKIFNKIR (119 aa). Residues 601–624 form a disordered region; the sequence is GEYATSDDCPRYIIRPNDSPEEGQ. A Phosphotyrosine modification is found at tyrosine 612. At serine 682 the chain carries Phosphoserine. The disordered stretch occupies residues 831-865; that stretch reads EVEETMEDVTGKDKDDDGLEPDVENEKESLPGPFV.

The protein belongs to the RSC1 family. In terms of assembly, component of the two forms of the RSC complex composed of at least either RSC1 or RSC2, and ARP7, ARP9, LDB7, NPL6, RSC3, RSC30, RSC4, RSC58, RSC6, RSC8, RSC9, SFH1, STH1, HTL1 and probably RTT102. The complexes interact with histone and histone variant components of centromeric chromatin.

Its subcellular location is the nucleus. In terms of biological role, component of the chromatin structure remodeling complex (RSC), which is involved in transcription regulation and nucleosome positioning. RSC is responsible for the transfer of a histone octamer from a nucleosome core particle to naked DNA. The reaction requires ATP and involves an activated RSC-nucleosome intermediate. Remodeling reaction also involves DNA translocation, DNA twist and conformational change. As a reconfigurer of centromeric and flanking nucleosomes, RSC complex is required both for proper kinetochore function in chromosome segregation and, via a PKC1-dependent signaling pathway, for organization of the cellular cytoskeleton. This subunit is involved in meiotic sporulation through regulating IME2 expression, and is also essential for 2-micron plasmid maintenance and for normal REP1 protein localization. This Saccharomyces cerevisiae (strain ATCC 204508 / S288c) (Baker's yeast) protein is Chromatin structure-remodeling complex subunit RSC2 (RSC2).